Reading from the N-terminus, the 603-residue chain is Protein Spindly (603 aa).

The residue at position 1 (M1) is an N-acetylmethionine. Residues 1 to 442 adopt a coiled-coil conformation; sequence MESDVIADLR…LKLKYEPEEK (442 aa). Phosphoserine is present on residues S513 and S553. The interval 542 to 577 is disordered; it reads ALSERSRNTPNSPRLAAESRLQREVKQGKETASKLE. A compositionally biased stretch (basic and acidic residues) spans 561-577; sequence RLQREVKQGKETASKLE.

Belongs to the Spindly family. Interacts with KNTC1 and ZW10. These interactions appear weak and may be transient or indirect. Interacts with dynein intermediate chain and dynactin (DCTN1). Interacts with the catalytically active form of USP45. In terms of processing, monoubiquitinated with'Lys-48' linkage. Deubiquitinated by USP45.

Its subcellular location is the cytoplasm. The protein localises to the cytoskeleton. The protein resides in the microtubule organizing center. It is found in the centrosome. It localises to the chromosome. Its subcellular location is the centromere. The protein localises to the kinetochore. The protein resides in the nucleus. It is found in the spindle pole. In terms of biological role, required for the localization of dynein and dynactin to the mitotic kintochore. Dynein is believed to control the initial lateral interaction between the kinetochore and spindle microtubules and to facilitate the subsequent formation of end-on kinetochore-microtubule attachments mediated by the NDC80 complex. Also required for correct spindle orientation. Does not appear to be required for the removal of spindle assembly checkpoint (SAC) proteins from the kinetochore upon bipolar spindle attachment. Acts as an adapter protein linking the dynein motor complex to various cargos and converts dynein from a non-processive to a highly processive motor in the presence of dynactin. Facilitates the interaction between dynein and dynactin and activates dynein processivity (the ability to move along a microtubule for a long distance without falling off the track). Plays a role in cell migration. The sequence is that of Protein Spindly from Bos taurus (Bovine).